Reading from the N-terminus, the 1164-residue chain is Protein PLASTID MOVEMENT IMPAIRED 1-RELATED 1 (1164 aa).

Positions 30-54 are disordered; the sequence is KNPRGSVAGSNKTPTKPLSRSNLAE. A compositionally biased stretch (polar residues) spans 37 to 51; that stretch reads AGSNKTPTKPLSRSN. Residues 69 to 217 enclose the C2 NT-type domain; it reads INHVRNRRFN…TLSMSFGYTV (149 aa). Positions 224 to 263 are enriched in polar residues; it reads PASSGSTQNFRSSSNVKQTSNNTGLTRAISAKSSLGNGKS. 4 disordered regions span residues 224–268, 466–486, 1038–1063, and 1124–1164; these read PASS…SRRY, APEEGNKISPKNEESVVPKDA, SELKKTDEEEEADASDAKKEEKPMEE, and GSAK…IMPK. Basic and acidic residues-rich tracts occupy residues 469-486 and 1052-1062; these read EGNKISPKNEESVVPKDA and SDAKKEEKPME.

The protein resides in the cytoplasm. Functionally, together with PMI1, necessary for chloroplast and nuclear photorelocation movements via the regulation of chloroplast-actin (cp-actin) filaments in pavement cells. The protein is Protein PLASTID MOVEMENT IMPAIRED 1-RELATED 1 of Arabidopsis thaliana (Mouse-ear cress).